The sequence spans 104 residues: Inclusion membrane protein F (104 aa).

Helical transmembrane passes span 39 to 59 (LVVA…SLVA) and 70 to 90 (LAVL…VLFI).

Its subcellular location is the secreted. The protein localises to the host vacuole. It localises to the host pathogen-containing vacuole. It is found in the host pathogen-containing vacuole membrane. Functionally, inclusion membrane protein probably involved in early modification events of the chlamydial inclusion. In Chlamydia trachomatis serovar L2 (strain ATCC VR-902B / DSM 19102 / 434/Bu), this protein is Inclusion membrane protein F.